The chain runs to 242 residues: Trypsin-1 (242 aa).

The first 15 residues, 1–15, serve as a signal peptide directing secretion; it reads MISLVFVLLIGAAFA. Residues 16–20 constitute a propeptide, activation peptide; it reads TEDDK. Residues 21 to 240 enclose the Peptidase S1 domain; the sequence is IVGGYECKAY…FNDWLTSTMA (220 aa). 6 disulfide bridges follow: Cys27/Cys156, Cys45/Cys61, Cys129/Cys229, Cys136/Cys202, Cys167/Cys181, and Cys192/Cys216. His60 (charge relay system) is an active-site residue. Residues Glu72, Asn74, Val77, and Glu82 each coordinate Ca(2+). Asp104 (charge relay system) is an active-site residue. Catalysis depends on Ser196, which acts as the Charge relay system.

The protein belongs to the peptidase S1 family. Ca(2+) is required as a cofactor.

Its subcellular location is the secreted. The protein localises to the extracellular space. It catalyses the reaction Preferential cleavage: Arg-|-Xaa, Lys-|-Xaa.. In Salmo salar (Atlantic salmon), this protein is Trypsin-1.